A 296-amino-acid chain; its full sequence is Tubulin polyglutamylase complex subunit 2 (296 aa).

Residues 257–296 (KILIPKKKGPVQPVSGQKGPGPLAPPTSKPSAGCGNPVRK) form a disordered region.

As to quaternary structure, part of the neuronal tubulin polyglutamylase complex which contains TPGS1, TPGS2, TTLL1, LRRC49 and NICN1. Interacts with CSTPP1 and LRRC49.

The protein resides in the cytoplasm. The protein localises to the cytoskeleton. Its subcellular location is the microtubule organizing center. It is found in the centrosome. It localises to the centriolar satellite. Subunit of the tubulin polyglutamylase complex (TPGC). The complex mediates cilia and flagella polyglutamylation which is essential for their biogenesis and motility. The polypeptide is Tubulin polyglutamylase complex subunit 2 (Tpgs2) (Rattus norvegicus (Rat)).